We begin with the raw amino-acid sequence, 405 residues long: Probable tRNA sulfurtransferase (405 aa).

Residues 60 to 165 (EGVIERLRHV…QDAIYLTNQV (106 aa)) form the THUMP domain. ATP is bound by residues 183–184 (ML), 208–209 (HF), Arg-265, Gly-287, and Gln-296.

It belongs to the ThiI family.

The protein localises to the cytoplasm. The enzyme catalyses [ThiI sulfur-carrier protein]-S-sulfanyl-L-cysteine + a uridine in tRNA + 2 reduced [2Fe-2S]-[ferredoxin] + ATP + H(+) = [ThiI sulfur-carrier protein]-L-cysteine + a 4-thiouridine in tRNA + 2 oxidized [2Fe-2S]-[ferredoxin] + AMP + diphosphate. The catalysed reaction is [ThiS sulfur-carrier protein]-C-terminal Gly-Gly-AMP + S-sulfanyl-L-cysteinyl-[cysteine desulfurase] + AH2 = [ThiS sulfur-carrier protein]-C-terminal-Gly-aminoethanethioate + L-cysteinyl-[cysteine desulfurase] + A + AMP + 2 H(+). It functions in the pathway cofactor biosynthesis; thiamine diphosphate biosynthesis. Functionally, catalyzes the ATP-dependent transfer of a sulfur to tRNA to produce 4-thiouridine in position 8 of tRNAs, which functions as a near-UV photosensor. Also catalyzes the transfer of sulfur to the sulfur carrier protein ThiS, forming ThiS-thiocarboxylate. This is a step in the synthesis of thiazole, in the thiamine biosynthesis pathway. The sulfur is donated as persulfide by IscS. The chain is Probable tRNA sulfurtransferase from Latilactobacillus sakei subsp. sakei (strain 23K) (Lactobacillus sakei subsp. sakei).